A 167-amino-acid polypeptide reads, in one-letter code: Probable membrane-bound hydrogenase subunit mbhJ (167 aa).

[4Fe-4S] cluster contacts are provided by Cys-35, Cys-38, Cys-102, and Cys-132.

This sequence belongs to the complex I 20 kDa subunit family. The membrane-bound hydrogenase complex is composed of MbhK and MbhL, but may also contain MbhJ. [4Fe-4S] cluster is required as a cofactor.

It localises to the cell membrane. The enzyme catalyses H2 + 2 oxidized [2Fe-2S]-[ferredoxin] = 2 reduced [2Fe-2S]-[ferredoxin] + 2 H(+). Its activity is regulated as follows. Inhibited by 0.1 mM Cu(2+). Functionally, probable subunit of a hydrogen-evolving hydrogenase that utilizes protons both as a substrate for hydrogen production and proton translocation. Acts by coupling the redox reaction via ferredoxin and iron-sulfur (Fe-S) clusters to proton translocation across the membrane, thereby conserving the redox energy in a proton gradient. The protein is Probable membrane-bound hydrogenase subunit mbhJ of Pyrococcus furiosus (strain ATCC 43587 / DSM 3638 / JCM 8422 / Vc1).